The chain runs to 130 residues: Small ribosomal subunit protein uS9 (130 aa).

It belongs to the universal ribosomal protein uS9 family.

The protein is Small ribosomal subunit protein uS9 of Polaromonas sp. (strain JS666 / ATCC BAA-500).